Here is a 543-residue protein sequence, read N- to C-terminus: Serine/threonine-protein kinase Chk2 (543 aa).

A disordered region spans residues 1–66; it reads MSRESDVEAQ…SGTLSSLETV (66 aa). Residues 8–22 show a composition bias toward polar residues; that stretch reads EAQQSHGSSACSQPH. The segment covering 23 to 62 has biased composition (low complexity); it reads GSVTQSQGSSSQSQGISSSSTSTMPNSSQSSHSSSGTLSS. Residue serine 62 is modified to Phosphoserine; by PLK3. Threonine 68 carries the phosphothreonine; by ATM and MAP3K20 modification. At serine 73 the chain carries Phosphoserine; by PLK3. The FHA domain occupies 113–175; sequence YWFGRDKSCE…NGTFVNTELV (63 aa). In terms of domain architecture, Protein kinase spans 220 to 486; that stretch reads YIMSKTLGSG…TEEALRHPWL (267 aa). ATP-binding positions include 227–234, lysine 249, and 302–308; these read GSGACGEV and ELMEGGE. The active-site Proton acceptor is aspartate 347. ATP-binding positions include 351–352 and aspartate 368; that span reads EN. The segment at 368–394 is T-loop/activation segment; the sequence is DFGHSKILGETSLMRTLCGTPTYLAPE. At serine 379 the chain carries Phosphoserine; by autocatalysis. 2 positions are modified to phosphothreonine; by autocatalysis: threonine 383 and threonine 387. Serine 456 carries the post-translational modification Phosphoserine. Polar residues predominate over residues 506 to 517; sequence TALPQVLAQPST. Positions 506–538 are disordered; it reads TALPQVLAQPSTSRKRPREGEAEGAETTKRPAV. The span at 523 to 534 shows a compositional bias: basic and acidic residues; that stretch reads REGEAEGAETTK.

Belongs to the protein kinase superfamily. CAMK Ser/Thr protein kinase family. CHK2 subfamily. In terms of assembly, homodimer. Homodimerization is part of the activation process but the dimer may dissociate following activation. Interacts with PML. Interacts with TP53. Interacts with RB1; phosphorylates RB1. Interacts with BRCA1. Interacts (phosphorylated at Thr-68) with MDC1; requires ATM-mediated phosphorylation of CHEK2. Interacts with TP53BP1; modulates CHEK2 phosphorylation at Thr-68 in response to ionizing radiation. Interacts with CDC25A; phosphorylates CDC25A and mediates its degradation in response to ionizing radiation. Interacts with CUL1; mediates CHEK2 ubiquitination and regulation. Interacts with CDKN2AIP. Interacts (via protein kinase domain) with CCAR2 (via N-terminus). Interacts with SIRT1. It depends on Mg(2+) as a cofactor. Phosphorylated. Phosphorylated at Ser-73 by PLK3 in response to DNA damage, promoting phosphorylation at Thr-68 by ATM and the G2/M transition checkpoint. Phosphorylation at Thr-68 induces homodimerization. Autophosphorylates at Thr-383 and Thr-387 in the T-loop/activation segment upon dimerization to become fully active and phosphorylate its substrates like for instance CDC25C. DNA damage-induced autophosphorylation at Ser-379 induces CUL1-mediated ubiquitination and regulates the pro-apoptotic function. Phosphorylation at Ser-456 also regulates ubiquitination. Phosphorylated by PLK4. Post-translationally, ubiquitinated. CUL1-mediated ubiquitination regulates the pro-apoptotic function. Ubiquitination may also regulate protein stability. Ubiquitinated by RNF8 via 'Lys-48'-linked ubiquitination. In terms of tissue distribution, high expression is found in testis, spleen, colon and peripheral blood leukocytes. Low expression is found in other tissues.

The protein localises to the nucleus. The protein resides in the PML body. It is found in the nucleoplasm. The enzyme catalyses L-seryl-[protein] + ATP = O-phospho-L-seryl-[protein] + ADP + H(+). It catalyses the reaction L-threonyl-[protein] + ATP = O-phospho-L-threonyl-[protein] + ADP + H(+). Activated through phosphorylation at Thr-68 by ATM in response to DNA double-strand breaks. Activation is modulated by several mediators including MDC1 and TP53BP1. Induces homodimerization with exchange of the T-loop/activation segment between protomers and transphosphorylation of the protomers. The autophosphorylated kinase dimer is fully active. Negatively regulated by PPM1D through dephosphorylation of Thr-68. In terms of biological role, serine/threonine-protein kinase which is required for checkpoint-mediated cell cycle arrest, activation of DNA repair and apoptosis in response to the presence of DNA double-strand breaks. May also negatively regulate cell cycle progression during unperturbed cell cycles. Following activation, phosphorylates numerous effectors preferentially at the consensus sequence [L-X-R-X-X-S/T]. Regulates cell cycle checkpoint arrest through phosphorylation of CDC25A, CDC25B and CDC25C, inhibiting their activity. Inhibition of CDC25 phosphatase activity leads to increased inhibitory tyrosine phosphorylation of CDK-cyclin complexes and blocks cell cycle progression. May also phosphorylate NEK6 which is involved in G2/M cell cycle arrest. Regulates DNA repair through phosphorylation of BRCA2, enhancing the association of RAD51 with chromatin which promotes DNA repair by homologous recombination. Also stimulates the transcription of genes involved in DNA repair (including BRCA2) through the phosphorylation and activation of the transcription factor FOXM1. Regulates apoptosis through the phosphorylation of p53/TP53, MDM4 and PML. Phosphorylation of p53/TP53 at 'Ser-20' by CHEK2 may alleviate inhibition by MDM2, leading to accumulation of active p53/TP53. Phosphorylation of MDM4 may also reduce degradation of p53/TP53. Also controls the transcription of pro-apoptotic genes through phosphorylation of the transcription factor E2F1. Tumor suppressor, it may also have a DNA damage-independent function in mitotic spindle assembly by phosphorylating BRCA1. Its absence may be a cause of the chromosomal instability observed in some cancer cells. Promotes the CCAR2-SIRT1 association and is required for CCAR2-mediated SIRT1 inhibition. Under oxidative stress, promotes ATG7 ubiquitination by phosphorylating the E3 ubiquitin ligase TRIM32 at 'Ser-55' leading to positive regulation of the autophagosme assembly. Functionally, (Microbial infection) Phosphorylates herpes simplex virus 1/HHV-1 protein ICP0 and thus activates its SUMO-targeted ubiquitin ligase activity. The chain is Serine/threonine-protein kinase Chk2 from Homo sapiens (Human).